The following is a 303-amino-acid chain: MKFLVVGAGGVGGYIGGRLSEKGNDVTFLVRQKRAEQLKKTGLVIHSEKGNVSFQPELISAGETGQFDVVIIASKAYSLGQVIEDVKPFIHQESVIIPFLNGYRHYEQLFAAFSKEQVLGGLCFIESALDNKGEIHHTSASHRFVFGEWNGERTERIRALEEAFSGVKAEVIISGHIEKDIWKKYLFIAAQAGITTLFQRPLGPILATEAGRHTAQTLIGEICTVLRKEGVPADPALEEESFRTMTSMSYHMKSSMLRDMENGQTTEGDHLHGFLIEKAKRLSLAAPVLETVYANLQMYEAEK.

NADP(+) is bound by residues glycine 7–glycine 12 and asparagine 101. The active-site Proton donor is the lysine 184. Residue glutamate 267 participates in NADP(+) binding.

Belongs to the ketopantoate reductase family.

This is an uncharacterized protein from Bacillus subtilis (strain 168).